The primary structure comprises 398 residues: Selection and upkeep of intraepithelial T-cells protein 8 (398 aa).

A signal peptide spans 1-25; it reads MMKPEFSHFFGFCVYFLFLQVMASS. One can recognise an Ig-like V-type domain in the interval 26-141; that stretch reads EKLRVTTPTR…DVAIMNLNVT (116 aa). The Extracellular portion of the chain corresponds to 26 to 244; sequence EKLRVTTPTR…ANELFNQDYL (219 aa). Cysteines 49 and 123 form a disulfide. Asn-92 and Asn-139 each carry an N-linked (GlcNAc...) asparagine glycan. The Ig-like C1-type domain maps to 142–233; the sequence is AVGLETEIHV…TGEEKQTSII (92 aa). A disulfide bridge connects residues Cys-163 and Cys-217. The helical transmembrane segment at 245-265 threads the bilayer; the sequence is WVGIFPFSVLSLILFGVLPFI. Residues 266–288 lie on the Cytoplasmic side of the membrane; sequence NSFFRSQGCASGCLSKCLPVVTS. A helical transmembrane segment spans residues 289-309; it reads WPVQIVHFLVCSGVLFAVYLP. Topologically, residues 310–331 are extracellular; sequence HRYRVSLSDPQFPLYNNWITEL. A helical membrane pass occupies residues 332–352; sequence LIVILFLTICFVLPITVLLLI. The Cytoplasmic portion of the chain corresponds to 353 to 398; the sequence is KLSPTCLAKWEKNKDDIMDSQLGLGKAREASTLYEEQSRKSWEQEK.

Belongs to the SKINT family. In terms of tissue distribution, expressed in skin, thymus, testis and, to a lower extent, bladder, brain, heart, kidney, mammary gland, small intestine and uterus.

It localises to the membrane. In terms of biological role, may act by engaging a cell surface molecule on immature T-cells in the embryonic thymus. The sequence is that of Selection and upkeep of intraepithelial T-cells protein 8 (Skint8) from Mus musculus (Mouse).